Here is a 572-residue protein sequence, read N- to C-terminus: Proline--tRNA ligase (572 aa).

This sequence belongs to the class-II aminoacyl-tRNA synthetase family. ProS type 1 subfamily. Homodimer.

The protein localises to the cytoplasm. It carries out the reaction tRNA(Pro) + L-proline + ATP = L-prolyl-tRNA(Pro) + AMP + diphosphate. In terms of biological role, catalyzes the attachment of proline to tRNA(Pro) in a two-step reaction: proline is first activated by ATP to form Pro-AMP and then transferred to the acceptor end of tRNA(Pro). As ProRS can inadvertently accommodate and process non-cognate amino acids such as alanine and cysteine, to avoid such errors it has two additional distinct editing activities against alanine. One activity is designated as 'pretransfer' editing and involves the tRNA(Pro)-independent hydrolysis of activated Ala-AMP. The other activity is designated 'posttransfer' editing and involves deacylation of mischarged Ala-tRNA(Pro). The misacylated Cys-tRNA(Pro) is not edited by ProRS. This Escherichia fergusonii (strain ATCC 35469 / DSM 13698 / CCUG 18766 / IAM 14443 / JCM 21226 / LMG 7866 / NBRC 102419 / NCTC 12128 / CDC 0568-73) protein is Proline--tRNA ligase.